The sequence spans 513 residues: MQLNPSEISELIKSRIQGLEASADVRNQGTVISVTDGIVRIHGLSDVMQGEMLEFPGNTFGLALNLERDSVGAVILGEYEHISEGDIVKTTGRILEVPVGPELVGRVVDALGNPIDGKGPVNAKLTDAIEKIAPGVIWRKSVSQPVQTGLKSIDSMVPIGRGQRELIIGDRQCGKTAVAIDTIINQKGKDLICIYVAIGQKASSIMNVVRKLEETGALEYTIVVAASASESAAMQYLAPYAGCTMGEYFRDRGQDALIIYDDLTKQAWAYRQISLLLRRPPGREAYPGDVFYLHSRLLERAARVSEEYVEKFTNGEVKGKSGSLTALPVIETQAGDVTAFVPTNVISITDGQIFLETDLFNAGIRPAINAGVSVSRVGGAAQTKVVKKLSGGIRTDLAQYRELAAFAQFASDLDEATRKQLERGRRVTELLKQPQYQPLQVWELAVSLFSANNGYLDDLDVKDVLPFEKGLREYLKTSHADLIKRIEDTKDLSKDDESALHAAIKDFKKSGAY.

An ATP-binding site is contributed by 169–176; that stretch reads GDRQCGKT.

The protein belongs to the ATPase alpha/beta chains family. F-type ATPases have 2 components, CF(1) - the catalytic core - and CF(0) - the membrane proton channel. CF(1) has five subunits: alpha(3), beta(3), gamma(1), delta(1), epsilon(1). CF(0) has three main subunits: a(1), b(2) and c(9-12). The alpha and beta chains form an alternating ring which encloses part of the gamma chain. CF(1) is attached to CF(0) by a central stalk formed by the gamma and epsilon chains, while a peripheral stalk is formed by the delta and b chains.

The protein localises to the cell inner membrane. It carries out the reaction ATP + H2O + 4 H(+)(in) = ADP + phosphate + 5 H(+)(out). Functionally, produces ATP from ADP in the presence of a proton gradient across the membrane. The alpha chain is a regulatory subunit. The protein is ATP synthase subunit alpha 1 of Burkholderia thailandensis (strain ATCC 700388 / DSM 13276 / CCUG 48851 / CIP 106301 / E264).